Consider the following 897-residue polypeptide: Isoleucine--tRNA ligase (897 aa).

Positions 59-69 match the 'HIGH' region motif; the sequence is PYANGDIHVGH. Residue Glu552 coordinates L-isoleucyl-5'-AMP. A 'KMSKS' region motif is present at residues 593 to 597; that stretch reads KMSKS. Lys596 contacts ATP. The Zn(2+) site is built by Cys872, Cys875, Cys890, and Cys893.

It belongs to the class-I aminoacyl-tRNA synthetase family. IleS type 1 subfamily. Monomer. The cofactor is Zn(2+).

It is found in the cytoplasm. It catalyses the reaction tRNA(Ile) + L-isoleucine + ATP = L-isoleucyl-tRNA(Ile) + AMP + diphosphate. Catalyzes the attachment of isoleucine to tRNA(Ile). As IleRS can inadvertently accommodate and process structurally similar amino acids such as valine, to avoid such errors it has two additional distinct tRNA(Ile)-dependent editing activities. One activity is designated as 'pretransfer' editing and involves the hydrolysis of activated Val-AMP. The other activity is designated 'posttransfer' editing and involves deacylation of mischarged Val-tRNA(Ile). This Mycoplasmoides gallisepticum (strain R(low / passage 15 / clone 2)) (Mycoplasma gallisepticum) protein is Isoleucine--tRNA ligase.